We begin with the raw amino-acid sequence, 98 residues long: Aspartyl/glutamyl-tRNA(Asn/Gln) amidotransferase subunit C (98 aa).

Belongs to the GatC family. In terms of assembly, heterotrimer of A, B and C subunits.

The catalysed reaction is L-glutamyl-tRNA(Gln) + L-glutamine + ATP + H2O = L-glutaminyl-tRNA(Gln) + L-glutamate + ADP + phosphate + H(+). It carries out the reaction L-aspartyl-tRNA(Asn) + L-glutamine + ATP + H2O = L-asparaginyl-tRNA(Asn) + L-glutamate + ADP + phosphate + 2 H(+). In terms of biological role, allows the formation of correctly charged Asn-tRNA(Asn) or Gln-tRNA(Gln) through the transamidation of misacylated Asp-tRNA(Asn) or Glu-tRNA(Gln) in organisms which lack either or both of asparaginyl-tRNA or glutaminyl-tRNA synthetases. The reaction takes place in the presence of glutamine and ATP through an activated phospho-Asp-tRNA(Asn) or phospho-Glu-tRNA(Gln). The polypeptide is Aspartyl/glutamyl-tRNA(Asn/Gln) amidotransferase subunit C (Acidothermus cellulolyticus (strain ATCC 43068 / DSM 8971 / 11B)).